The chain runs to 436 residues: Serine hydroxymethyltransferase (436 aa).

Residues Leu-120 and 124-126 (GHL) contribute to the (6S)-5,6,7,8-tetrahydrofolate site. Lys-229 carries the N6-(pyridoxal phosphate)lysine modification.

It belongs to the SHMT family. Homodimer. The cofactor is pyridoxal 5'-phosphate.

Its subcellular location is the cytoplasm. The enzyme catalyses (6R)-5,10-methylene-5,6,7,8-tetrahydrofolate + glycine + H2O = (6S)-5,6,7,8-tetrahydrofolate + L-serine. It participates in one-carbon metabolism; tetrahydrofolate interconversion. It functions in the pathway amino-acid biosynthesis; glycine biosynthesis; glycine from L-serine: step 1/1. Catalyzes the reversible interconversion of serine and glycine with tetrahydrofolate (THF) serving as the one-carbon carrier. This reaction serves as the major source of one-carbon groups required for the biosynthesis of purines, thymidylate, methionine, and other important biomolecules. Also exhibits THF-independent aldolase activity toward beta-hydroxyamino acids, producing glycine and aldehydes, via a retro-aldol mechanism. This Roseiflexus castenholzii (strain DSM 13941 / HLO8) protein is Serine hydroxymethyltransferase.